We begin with the raw amino-acid sequence, 562 residues long: Phosphoenolpyruvate carboxykinase (ATP) (562 aa).

Position 265 to 272 (265 to 272) interacts with ATP; the sequence is GLSGTGKT.

The protein belongs to the phosphoenolpyruvate carboxykinase (ATP) family.

It catalyses the reaction oxaloacetate + ATP = phosphoenolpyruvate + ADP + CO2. It functions in the pathway carbohydrate biosynthesis; gluconeogenesis. The polypeptide is Phosphoenolpyruvate carboxykinase (ATP) (pckA) (Dictyostelium discoideum (Social amoeba)).